The following is a 1257-amino-acid chain: Probable aldehyde oxidase gad-3 (1257 aa).

One can recognise a 2Fe-2S ferredoxin-type domain in the interval 4 to 91; the sequence is TGIFFNVNGK…KTFVITVEGV (88 aa). [2Fe-2S] cluster contacts are provided by Cys-43, Cys-48, Cys-51, and Cys-73. Positions 229–459 constitute an FAD-binding PCMH-type domain; it reads LKGDRIELLL…TSLEVHIDAL (231 aa). Glu-1208 serves as the catalytic Proton acceptor.

The protein belongs to the xanthine dehydrogenase family. It depends on [2Fe-2S] cluster as a cofactor. The cofactor is FAD. Requires Mo-molybdopterin as cofactor.

The enzyme catalyses an aldehyde + O2 + H2O = a carboxylate + H2O2 + H(+). May be involved in the metabolism of 1-methylnicotinamide (MNA). Linked to regulation of longevity through generation of reactive oxygen species, where it probably functions in a pathway downstream of the sirtuin sir-2.1 and the nicotinamide N-methyltransferase anmt-1. This is Probable aldehyde oxidase gad-3 from Caenorhabditis elegans.